The chain runs to 444 residues: Glutamate--tRNA ligase (444 aa).

Residues 12–22 (PSPTGFLHVGG) carry the 'HIGH' region motif. Residues 213–217 (KMSKR) carry the 'KMSKS' region motif. ATP is bound at residue Lys-216.

Belongs to the class-I aminoacyl-tRNA synthetase family. Glutamate--tRNA ligase type 1 subfamily. Monomer.

It is found in the cytoplasm. The catalysed reaction is tRNA(Glu) + L-glutamate + ATP = L-glutamyl-tRNA(Glu) + AMP + diphosphate. Its function is as follows. Catalyzes the attachment of glutamate to tRNA(Glu) in a two-step reaction: glutamate is first activated by ATP to form Glu-AMP and then transferred to the acceptor end of tRNA(Glu). This Methylacidiphilum infernorum (isolate V4) (Methylokorus infernorum (strain V4)) protein is Glutamate--tRNA ligase.